Consider the following 117-residue polypeptide: Large ribosomal subunit protein uL18 (117 aa).

This sequence belongs to the universal ribosomal protein uL18 family. Part of the 50S ribosomal subunit; part of the 5S rRNA/L5/L18/L25 subcomplex. Contacts the 5S and 23S rRNAs.

Functionally, this is one of the proteins that bind and probably mediate the attachment of the 5S RNA into the large ribosomal subunit, where it forms part of the central protuberance. This Azoarcus sp. (strain BH72) protein is Large ribosomal subunit protein uL18.